A 355-amino-acid chain; its full sequence is UDP-N-acetylglucosamine--N-acetylmuramyl-(pentapeptide) pyrophosphoryl-undecaprenol N-acetylglucosamine transferase (355 aa).

Residues 15–17 (TGG), Asn-127, Arg-163, Ser-191, Ile-244, 263–268 (ALTVSE), and Gln-288 each bind UDP-N-acetyl-alpha-D-glucosamine.

This sequence belongs to the glycosyltransferase 28 family. MurG subfamily.

Its subcellular location is the cell inner membrane. The enzyme catalyses di-trans,octa-cis-undecaprenyl diphospho-N-acetyl-alpha-D-muramoyl-L-alanyl-D-glutamyl-meso-2,6-diaminopimeloyl-D-alanyl-D-alanine + UDP-N-acetyl-alpha-D-glucosamine = di-trans,octa-cis-undecaprenyl diphospho-[N-acetyl-alpha-D-glucosaminyl-(1-&gt;4)]-N-acetyl-alpha-D-muramoyl-L-alanyl-D-glutamyl-meso-2,6-diaminopimeloyl-D-alanyl-D-alanine + UDP + H(+). It functions in the pathway cell wall biogenesis; peptidoglycan biosynthesis. In terms of biological role, cell wall formation. Catalyzes the transfer of a GlcNAc subunit on undecaprenyl-pyrophosphoryl-MurNAc-pentapeptide (lipid intermediate I) to form undecaprenyl-pyrophosphoryl-MurNAc-(pentapeptide)GlcNAc (lipid intermediate II). This chain is UDP-N-acetylglucosamine--N-acetylmuramyl-(pentapeptide) pyrophosphoryl-undecaprenol N-acetylglucosamine transferase, found in Citrobacter koseri (strain ATCC BAA-895 / CDC 4225-83 / SGSC4696).